We begin with the raw amino-acid sequence, 380 residues long: Polygalacturonase 2 (380 aa).

The N-terminal stretch at 1–20 (MIAGSKLLMLGLFGALAVHA) is a signal peptide. Positions 21–38 (LPEPAKAQVTAAPKLEER) are excised as a propeptide. Cysteine 42 and cysteine 60 are oxidised to a cystine. PbH1 repeat units lie at residues 173 to 204 (ATDL…DVGS) and 205 to 226 (STGI…AVNS). The active-site Proton donor is the aspartate 219. A disulfide bridge links cysteine 221 with cysteine 237. Histidine 241 is an active-site residue. PbH1 repeat units lie at residues 256–277 (VANV…RIKT), 285–307 (VKNV…VIEQ), and 319–364 (TDGV…SVSG). A glycan (N-linked (GlcNAc...) asparagine) is linked at asparagine 287. 2 disulfides stabilise this stretch: cysteine 347–cysteine 352 and cysteine 371–cysteine 380.

Belongs to the glycosyl hydrolase 28 family.

Its subcellular location is the secreted. The enzyme catalyses (1,4-alpha-D-galacturonosyl)n+m + H2O = (1,4-alpha-D-galacturonosyl)n + (1,4-alpha-D-galacturonosyl)m.. This Penicillium olsonii protein is Polygalacturonase 2 (PG2).